Reading from the N-terminus, the 360-residue chain is Phospho-N-acetylmuramoyl-pentapeptide-transferase (360 aa).

10 helical membrane passes run threonine 26–glutamine 46, threonine 73–leucine 93, valine 98–leucine 118, leucine 136–valine 156, tryptophan 168–serine 188, glycine 199–serine 219, glycine 235–tryptophan 255, valine 263–alanine 283, isoleucine 288–valine 308, and valine 338–lysine 358.

This sequence belongs to the glycosyltransferase 4 family. MraY subfamily. The cofactor is Mg(2+).

It is found in the cell inner membrane. It carries out the reaction UDP-N-acetyl-alpha-D-muramoyl-L-alanyl-gamma-D-glutamyl-meso-2,6-diaminopimeloyl-D-alanyl-D-alanine + di-trans,octa-cis-undecaprenyl phosphate = di-trans,octa-cis-undecaprenyl diphospho-N-acetyl-alpha-D-muramoyl-L-alanyl-D-glutamyl-meso-2,6-diaminopimeloyl-D-alanyl-D-alanine + UMP. It functions in the pathway cell wall biogenesis; peptidoglycan biosynthesis. Its function is as follows. Catalyzes the initial step of the lipid cycle reactions in the biosynthesis of the cell wall peptidoglycan: transfers peptidoglycan precursor phospho-MurNAc-pentapeptide from UDP-MurNAc-pentapeptide onto the lipid carrier undecaprenyl phosphate, yielding undecaprenyl-pyrophosphoryl-MurNAc-pentapeptide, known as lipid I. This chain is Phospho-N-acetylmuramoyl-pentapeptide-transferase, found in Halorhodospira halophila (strain DSM 244 / SL1) (Ectothiorhodospira halophila (strain DSM 244 / SL1)).